A 271-amino-acid chain; its full sequence is Orotidine 5'-phosphate decarboxylase (271 aa).

The Proton donor role is filled by K95.

This sequence belongs to the OMP decarboxylase family. Type 2 subfamily.

It carries out the reaction orotidine 5'-phosphate + H(+) = UMP + CO2. The protein operates within pyrimidine metabolism; UMP biosynthesis via de novo pathway; UMP from orotate: step 2/2. In Ralstonia nicotianae (strain ATCC BAA-1114 / GMI1000) (Ralstonia solanacearum), this protein is Orotidine 5'-phosphate decarboxylase (pyrF).